We begin with the raw amino-acid sequence, 88 residues long: MISKEQKQKIITEFGKNPNDTGSVEVQIALITDRIRYLTEHLRSNKKDHSSKRGLLKLVGQRRNLLRYYQKKNLEAYRTLIAKLGLRK.

The protein belongs to the universal ribosomal protein uS15 family. In terms of assembly, part of the 30S ribosomal subunit. Forms a bridge to the 50S subunit in the 70S ribosome, contacting the 23S rRNA.

In terms of biological role, one of the primary rRNA binding proteins, it binds directly to 16S rRNA where it helps nucleate assembly of the platform of the 30S subunit by binding and bridging several RNA helices of the 16S rRNA. Functionally, forms an intersubunit bridge (bridge B4) with the 23S rRNA of the 50S subunit in the ribosome. This is Small ribosomal subunit protein uS15 from Borrelia turicatae (strain 91E135).